A 231-amino-acid chain; its full sequence is 5'-methylthioadenosine/S-adenosylhomocysteine nucleosidase (231 aa).

The Proton acceptor role is filled by Glu-12. Residues Gly-78, Val-153, and 174 to 175 contribute to the substrate site; that span reads ME. The active-site Proton donor is the Asp-198.

The protein belongs to the PNP/UDP phosphorylase family. MtnN subfamily.

The enzyme catalyses S-adenosyl-L-homocysteine + H2O = S-(5-deoxy-D-ribos-5-yl)-L-homocysteine + adenine. It carries out the reaction S-methyl-5'-thioadenosine + H2O = 5-(methylsulfanyl)-D-ribose + adenine. The catalysed reaction is 5'-deoxyadenosine + H2O = 5-deoxy-D-ribose + adenine. It functions in the pathway amino-acid biosynthesis; L-methionine biosynthesis via salvage pathway; S-methyl-5-thio-alpha-D-ribose 1-phosphate from S-methyl-5'-thioadenosine (hydrolase route): step 1/2. Functionally, catalyzes the irreversible cleavage of the glycosidic bond in both 5'-methylthioadenosine (MTA) and S-adenosylhomocysteine (SAH/AdoHcy) to adenine and the corresponding thioribose, 5'-methylthioribose and S-ribosylhomocysteine, respectively. Also cleaves 5'-deoxyadenosine, a toxic by-product of radical S-adenosylmethionine (SAM) enzymes, into 5-deoxyribose and adenine. The polypeptide is 5'-methylthioadenosine/S-adenosylhomocysteine nucleosidase (Vibrio vulnificus (strain CMCP6)).